A 115-amino-acid polypeptide reads, in one-letter code: Cytochrome c oxidase assembly protein COX16 homolog, mitochondrial (115 aa).

At 1 to 6 (MSRLKF) the chain is on the mitochondrial matrix side. A helical transmembrane segment spans residues 7–29 (VRVGLPFFAIVLGSAYGLHFFQQ). The Mitochondrial intermembrane portion of the chain corresponds to 30-115 (VRFDFRKIKQ…RKVRELKSNV (86 aa)).

The protein belongs to the COX16 family.

The protein resides in the mitochondrion inner membrane. Required for the assembly of the mitochondrial respiratory chain complex IV (CIV), also known as cytochrome c oxidase. The polypeptide is Cytochrome c oxidase assembly protein COX16 homolog, mitochondrial (Caenorhabditis elegans).